A 359-amino-acid polypeptide reads, in one-letter code: Phospho-N-acetylmuramoyl-pentapeptide-transferase (359 aa).

10 consecutive transmembrane segments (helical) span residues 3 to 23 (QILFAAGIALAVSILLTPVLI), 53 to 73 (GGVAILAGLWAGYWGSHLIGI), 84 to 104 (GLLVLGLTTALGGVGFLDDFI), 117 to 137 (TAKLVGQLIAAVAFGILALQF), 156 to 176 (IATVTMGSVVFVAFCYLLVSA), 187 to 207 (LDGLAAGSMSLVLGAYVIITF), 231 to 251 (LALICAAGAGACIGFLWWNAA), 255 to 275 (IFMGDTGSLALGGMLAGLSIT), 283 to 303 (VVIGALFVAEAASVVIQVAVF), and 330 to 350 (VIIRFWLLAAIASAIGLALFY).

This sequence belongs to the glycosyltransferase 4 family. MraY subfamily. The cofactor is Mg(2+).

The protein resides in the cell membrane. It carries out the reaction UDP-N-acetyl-alpha-D-muramoyl-L-alanyl-gamma-D-glutamyl-meso-2,6-diaminopimeloyl-D-alanyl-D-alanine + di-trans,octa-cis-undecaprenyl phosphate = di-trans,octa-cis-undecaprenyl diphospho-N-acetyl-alpha-D-muramoyl-L-alanyl-D-glutamyl-meso-2,6-diaminopimeloyl-D-alanyl-D-alanine + UMP. The protein operates within cell wall biogenesis; peptidoglycan biosynthesis. Functionally, catalyzes the initial step of the lipid cycle reactions in the biosynthesis of the cell wall peptidoglycan: transfers peptidoglycan precursor phospho-MurNAc-pentapeptide from UDP-MurNAc-pentapeptide onto the lipid carrier undecaprenyl phosphate, yielding undecaprenyl-pyrophosphoryl-MurNAc-pentapeptide, known as lipid I. The chain is Phospho-N-acetylmuramoyl-pentapeptide-transferase from Rhodococcus opacus (strain B4).